We begin with the raw amino-acid sequence, 520 residues long: Solute carrier family 2, facilitated glucose transporter member 14 (520 aa).

The Cytoplasmic portion of the chain corresponds to 1–29 (MEFHNGGHVSGIGGFLVSLTSRMKPHTLA). The chain crosses the membrane as a helical span at residues 30 to 50 (VTPALIFAITVATIGSFQFGY). Residues 51–88 (NTGVINAPETIIKEFINKTLTDKANAPPSEVLLTNLWS) lie on the Extracellular side of the membrane. The N-linked (GlcNAc...) asparagine glycan is linked to Asn-67. The helical transmembrane segment at 89–109 (LSVAIFSVGGMIGSFSVGLFV) threads the bilayer. The Cytoplasmic segment spans residues 110–117 (NRFGRRNS). A helical membrane pass occupies residues 118-138 (MLIVNLLAATGGCLMGLCKIA). Residues 139 to 148 (ESVEMLILGR) are Extracellular-facing. Residues 149–169 (LVIGLFCGLCTGFVPMYIGEI) traverse the membrane as a helical segment. Residues 170 to 177 (SPTALRGA) lie on the Cytoplasmic side of the membrane. The chain crosses the membrane as a helical span at residues 178–198 (FGTLNQLGIVIGILVAQIFGL). D-glucose is bound at residue Gln-183. Residues 199–207 (ELILGSEEL) lie on the Extracellular side of the membrane. A helical transmembrane segment spans residues 208-228 (WPVLLGFTILPAILQSAALPC). Residues 229 to 293 (CPESPRFLLI…LFRVSSYRQP (65 aa)) lie on the Cytoplasmic side of the membrane. A helical membrane pass occupies residues 294 to 314 (IIISIVLQLSQQLSGINAVFY). Residues 304–305 (QQ) and Asn-310 each bind D-glucose. Residues 315-328 (YSTGIFKDAGVQQP) lie on the Extracellular side of the membrane. A helical transmembrane segment spans residues 329 to 349 (IYATISAGVVNTIFTLLSLFL). Asn-339 contacts D-glucose. Topologically, residues 350-358 (VERAGRRTL) are cytoplasmic. A helical transmembrane segment spans residues 359-379 (HMIGLGGMAFCSTLMTVSLLL). Topologically, residues 380–392 (KNHYNGMSFVCIG) are extracellular. The chain crosses the membrane as a helical span at residues 393 to 413 (AILVFVACFEIGPGPIPWFIV). D-glucose contacts are provided by Glu-402 and Trp-410. The Cytoplasmic portion of the chain corresponds to 414–423 (AELFSQGPRP). A helical membrane pass occupies residues 424-444 (AAMAVAGCSNWTSNFLVGLLF). At 445 to 451 (PSAAYYL) the chain is on the extracellular side. The helical transmembrane segment at 452–472 (GAYVFIIFTGFLITFLAFTFF) threads the bilayer. The Cytoplasmic segment spans residues 473 to 520 (KVPETRGRTFEDITRAFEGQAHGADRSGKDGVMGMNSIEPAKETTTNV). The disordered stretch occupies residues 493 to 520 (AHGADRSGKDGVMGMNSIEPAKETTTNV).

Belongs to the major facilitator superfamily. Sugar transporter (TC 2.A.1.1) family. Glucose transporter subfamily. Mainly expressed in testis. Also expressed in small intestine, liver and kidney.

It localises to the cell membrane. The enzyme catalyses D-glucose(out) = D-glucose(in). The catalysed reaction is L-dehydroascorbate(out) = L-dehydroascorbate(in). Functionally, hexose transporter that can mediate the transport of glucose and dehydroascorbate across the cell membrane. The protein is Solute carrier family 2, facilitated glucose transporter member 14 of Homo sapiens (Human).